The primary structure comprises 234 residues: Prolactin-6A1 (234 aa).

An N-terminal signal peptide occupies residues 1 to 33; the sequence is MVKSWLRMSKKMEAGTLLMLLMSNILLWENVAS. Asn61 carries an N-linked (GlcNAc...) asparagine glycan. 2 disulfide bridges follow: Cys93/Cys209 and Cys226/Cys234.

This sequence belongs to the somatotropin/prolactin family.

It localises to the secreted. The polypeptide is Prolactin-6A1 (Prl6a1) (Rattus norvegicus (Rat)).